Reading from the N-terminus, the 194-residue chain is Small ribosomal subunit protein uS5 (194 aa).

Residues 26 to 89 enclose the S5 DRBM domain; that stretch reads LEEKVVEIRR…ADAKKRIIKV (64 aa).

It belongs to the universal ribosomal protein uS5 family. In terms of assembly, part of the 30S ribosomal subunit. Contacts proteins S4 and S8.

Functionally, with S4 and S12 plays an important role in translational accuracy. Located at the back of the 30S subunit body where it stabilizes the conformation of the head with respect to the body. The chain is Small ribosomal subunit protein uS5 from Sulfurihydrogenibium sp. (strain YO3AOP1).